The sequence spans 419 residues: UDP-N-acetylglucosamine 1-carboxyvinyltransferase (419 aa).

22 to 23 (KN) is a binding site for phosphoenolpyruvate. R91 contacts UDP-N-acetyl-alpha-D-glucosamine. C115 (proton donor) is an active-site residue. C115 carries the post-translational modification 2-(S-cysteinyl)pyruvic acid O-phosphothioketal. Residues 120–124 (RPVDL), 160–163 (KVSV), D305, and V327 contribute to the UDP-N-acetyl-alpha-D-glucosamine site.

It belongs to the EPSP synthase family. MurA subfamily.

It is found in the cytoplasm. It catalyses the reaction phosphoenolpyruvate + UDP-N-acetyl-alpha-D-glucosamine = UDP-N-acetyl-3-O-(1-carboxyvinyl)-alpha-D-glucosamine + phosphate. It participates in cell wall biogenesis; peptidoglycan biosynthesis. In terms of biological role, cell wall formation. Adds enolpyruvyl to UDP-N-acetylglucosamine. The protein is UDP-N-acetylglucosamine 1-carboxyvinyltransferase of Salmonella dublin (strain CT_02021853).